The sequence spans 250 residues: Ribonuclease 3 (250 aa).

Residues Met1–Lys15 show a composition bias toward basic residues. Residues Met1–Ala21 are disordered. The RNase III domain maps to Asn22–Gly150. Glu63 is a Mg(2+) binding site. Asp67 is an active-site residue. Mg(2+) is bound by residues Asp136 and Glu139. Glu139 is an active-site residue. The region spanning Asp175–Val244 is the DRBM domain.

This sequence belongs to the ribonuclease III family. Homodimer. Mg(2+) serves as cofactor.

Its subcellular location is the cytoplasm. It catalyses the reaction Endonucleolytic cleavage to 5'-phosphomonoester.. Its function is as follows. Digests double-stranded RNA. Involved in the processing of primary rRNA transcript to yield the immediate precursors to the large and small rRNAs (23S and 16S). Processes some mRNAs, and tRNAs when they are encoded in the rRNA operon. Processes pre-crRNA and tracrRNA of type II CRISPR loci if present in the organism. In Bradyrhizobium diazoefficiens (strain JCM 10833 / BCRC 13528 / IAM 13628 / NBRC 14792 / USDA 110), this protein is Ribonuclease 3.